A 379-amino-acid chain; its full sequence is ATP-sensitive inward rectifier potassium channel 10 (379 aa).

The Cytoplasmic segment spans residues 1 to 61 (MTSVAKVYYS…LKDLWTTFID (61 aa)). A 1,2-dioctanoyl-sn-glycero-3-phospho-(1D-myo-inositol-4,5-bisphosphate)-binding site is contributed by arginine 36. A helical transmembrane segment spans residues 62-88 (MQWRYKLLLFSATFAGTWFLFGVVWYL). The Extracellular segment spans residues 89–114 (VAVAHGDLLELGPPANHTPCVVQVHT). The cysteines at positions 108 and 140 are disulfide-linked. The segment at residues 115 to 131 (LTGAFLFSLESQTTIGY) is an intramembrane region (discontinuously helical; Pore-forming). Positions 128–133 (TIGYGF) match the Selectivity filter motif. At 132-140 (GFRYISEEC) the chain is on the extracellular side. Residues 141–166 (PLAIVLLIAQLVLTTILEIFITGTFL) form a helical membrane-spanning segment. Residues 167–379 (AKIARPKKRA…SALSVRISNV (213 aa)) lie on the Cytoplasmic side of the membrane. Residues lysine 168, arginine 171, and lysine 173 each contribute to the 1,2-dioctanoyl-sn-glycero-3-phospho-(1D-myo-inositol-4,5-bisphosphate) site. ATP is bound at residue 210–217 (GCQVTGKL).

Belongs to the inward rectifier-type potassium channel (TC 1.A.2.1) family. KCNJ10 subfamily. Homotetramer. In kidney cells, it forms heteromeric channels with Kir5.1/KCNJ16; this interaction is required for KCNJ16 localization to the basolateral membrane. Interacts with MAGI1, alone and possibly as a heteromer with KCNJ16; this interaction may facilitate KCNJ10/KCNJ16 potassium channel expression at the basolateral membrane in kidney cells. Interacts with PATJ. In terms of tissue distribution, widely expressed in adult brain, including in the neocortex, the stratum pyrimadale of the hippocampus and the piriform cortex. Expressed by cultured astrocytes and also by cocultured cortical neurons (at protein level). In the distal segment of the nephron, expressed in the distal convoluted tubule, the connecting tubule, and the early cortical collecting duct.

It localises to the membrane. The protein localises to the basolateral cell membrane. The catalysed reaction is K(+)(in) = K(+)(out). Channel activity is strongly regulated by variations of cytosolic pH; channels are activated by alkaline and inhibited by acidic pH values. Activated by phosphatidylinositol 4,5 biphosphate (PtdIns(4,5)P2). Inhibited by Ba(2+) and Cs(+). Functionally, may be responsible for potassium buffering action of glial cells in the brain. Inward rectifier potassium channels are characterized by a greater tendency to allow potassium to flow into the cell rather than out of it. Their voltage dependence is regulated by the concentration of extracellular potassium; as external potassium is raised, the voltage range of the channel opening shifts to more positive voltages. The inward rectification is mainly due to the blockage of outward current by internal magnesium. Can be blocked by extracellular barium and cesium. In the kidney, together with KCNJ16, mediates basolateral K(+) recycling in distal tubules; this process is critical for Na(+) reabsorption at the tubules. The protein is ATP-sensitive inward rectifier potassium channel 10 of Mus musculus (Mouse).